We begin with the raw amino-acid sequence, 911 residues long: Ribonuclease J (911 aa).

The transit peptide at 1 to 70 (MMKPASLQGF…VTSAPASGTS (70 aa)) directs the protein to the chloroplast. The interval 58–90 (SCSVTSAPASGTSSSSKTPRRRSGRLEGVGKSM) is disordered. A compositionally biased stretch (low complexity) spans 63 to 74 (SAPASGTSSSSK). H175, H177, D179, H180, H245, and D267 together coordinate Zn(2+). Residues 336 to 338 (ASN) and 468 to 472 (HTSGH) contribute to the substrate site. H494 is a binding site for Zn(2+). Disordered regions lie at residues 695–723 (VEGN…TLED) and 735–824 (EETA…WKPE). 2 stretches are compositionally biased toward basic and acidic residues: residues 713-722 (SPKEVDRTLE) and 783-795 (ADTE…KENS). Over residues 796–806 (RDDDELADASD) the composition is skewed to acidic residues. The Myb-like domain maps to 813 to 877 (PKRVRKNKWK…QCKSLWASLI (65 aa)).

This sequence belongs to the metallo-beta-lactamase superfamily. RNA-metabolizing metallo-beta-lactamase-like family. Bacterial RNase J subfamily. Homodimer. May be a subunit of the RNA degradosome. It depends on Zn(2+) as a cofactor. As to expression, moslty expressed in inflorescences, seedlings, leaves, flowers and flower buds, and, to a lower extent, in stems, siliques and roots.

The protein localises to the plastid. The protein resides in the chloroplast. Essential protein required during embryogenesis, especially in initiating and maintaining the organization of shoot apical meristems (SAMs), cotyledons, and hypocotyls. Involved in auxin-mediated pathways during embryogenesis. RNase that has both endonuclease and 5'-3' exonuclease activities. Involved in RNA surveillance to prevent overaccumulation of antisense RNA. Probably involved in maturation of rRNA and in some organisms also mRNA maturation and/or decay. This Arabidopsis thaliana (Mouse-ear cress) protein is Ribonuclease J.